Consider the following 566-residue polypeptide: Pyrophosphate--fructose 6-phosphate 1-phosphotransferase subunit beta 1 (566 aa).

The residue at position 16 (serine 16) is a Phosphoserine. Glycine 105 lines the diphosphate pocket. Mg(2+) is bound at residue aspartate 199. Substrate-binding positions include 227–229 (TID), 266–267 (KY), 274–276 (MGR), glutamate 335, and 440–443 (YEGR). Aspartate 229 functions as the Proton acceptor in the catalytic mechanism.

Belongs to the phosphofructokinase type A (PFKA) family. PPi-dependent PFK group II subfamily. Clade 'Long' sub-subfamily. As to quaternary structure, tetramer of two alpha (regulatory) and two beta (catalytic) chains. Mg(2+) is required as a cofactor.

The protein resides in the cytoplasm. The enzyme catalyses beta-D-fructose 6-phosphate + diphosphate = beta-D-fructose 1,6-bisphosphate + phosphate + H(+). It functions in the pathway carbohydrate degradation; glycolysis; D-glyceraldehyde 3-phosphate and glycerone phosphate from D-glucose: step 3/4. With respect to regulation, allosterically activated by fructose 2,6-bisphosphate. Catalytic subunit of pyrophosphate--fructose 6-phosphate 1-phosphotransferase. Catalyzes the phosphorylation of D-fructose 6-phosphate, the first committing step of glycolysis. Uses inorganic phosphate (PPi) as phosphoryl donor instead of ATP like common ATP-dependent phosphofructokinases (ATP-PFKs), which renders the reaction reversible, and can thus function both in glycolysis and gluconeogenesis. The protein is Pyrophosphate--fructose 6-phosphate 1-phosphotransferase subunit beta 1 of Arabidopsis thaliana (Mouse-ear cress).